We begin with the raw amino-acid sequence, 112 residues long: Transmembrane protein 14 homolog (112 aa).

Transmembrane regions (helical) follow at residues 9–26 (FKLNAAMAAIVLSGGVIG), 36–53 (LIAGSVFGLLYSTSAYYL), 60–77 (VGLGVSVLASSLLGGVMG), and 87–109 (IPIILATGSAFTLLSSGKELYNI).

This sequence belongs to the TMEM14 family.

Its subcellular location is the membrane. The polypeptide is Transmembrane protein 14 homolog (Dictyostelium discoideum (Social amoeba)).